Consider the following 66-residue polypeptide: Large ribosomal subunit protein bL31 (66 aa).

Zn(2+) contacts are provided by C16, C18, C36, and C39.

Belongs to the bacterial ribosomal protein bL31 family. Type A subfamily. Part of the 50S ribosomal subunit. Requires Zn(2+) as cofactor.

Binds the 23S rRNA. The sequence is that of Large ribosomal subunit protein bL31 from Nautilia profundicola (strain ATCC BAA-1463 / DSM 18972 / AmH).